The primary structure comprises 341 residues: Serpentine receptor class epsilon-8 (341 aa).

The next 7 helical transmembrane spans lie at 37–57 (VGFL…FIFI), 64–86 (LTFL…CIIV), 101–123 (WILV…LPIF), 143–163 (IWVS…SAIA), 169–189 (IPVV…YIGI), 235–255 (VQIS…MDHF), and 264–284 (WSYV…PIIL).

The protein belongs to the nematode receptor-like protein sre family.

Its subcellular location is the membrane. This is Serpentine receptor class epsilon-8 (sre-8) from Caenorhabditis elegans.